We begin with the raw amino-acid sequence, 470 residues long: tRNA-2-methylthio-N(6)-dimethylallyladenosine synthase (470 aa).

Positions 20 to 138 constitute an MTTase N-terminal domain; sequence PRVHIETFGC…LPELVERARS (119 aa). Positions 29, 65, 99, 176, 180, and 183 each coordinate [4Fe-4S] cluster. In terms of domain architecture, Radical SAM core spans 162–398; sequence REGDLKAWVT…MEVQNRIARA (237 aa). Positions 401-464 constitute a TRAM domain; it reads EARVGKVYDI…TWTLEGELVE (64 aa).

This sequence belongs to the methylthiotransferase family. MiaB subfamily. As to quaternary structure, monomer. [4Fe-4S] cluster serves as cofactor.

The protein localises to the cytoplasm. The enzyme catalyses N(6)-dimethylallyladenosine(37) in tRNA + (sulfur carrier)-SH + AH2 + 2 S-adenosyl-L-methionine = 2-methylsulfanyl-N(6)-dimethylallyladenosine(37) in tRNA + (sulfur carrier)-H + 5'-deoxyadenosine + L-methionine + A + S-adenosyl-L-homocysteine + 2 H(+). Functionally, catalyzes the methylthiolation of N6-(dimethylallyl)adenosine (i(6)A), leading to the formation of 2-methylthio-N6-(dimethylallyl)adenosine (ms(2)i(6)A) at position 37 in tRNAs that read codons beginning with uridine. The protein is tRNA-2-methylthio-N(6)-dimethylallyladenosine synthase of Symbiobacterium thermophilum (strain DSM 24528 / JCM 14929 / IAM 14863 / T).